Consider the following 776-residue polypeptide: Protein SEY1 (776 aa).

The Cytoplasmic portion of the chain corresponds to 1-681; the sequence is MADRSAIQLI…KRSIITTRTH (681 aa). In terms of domain architecture, GB1/RHD3-type G spans 34–263; the sequence is GLDYHVISVF…TENYYFKPQY (230 aa). 44–51 is a GTP binding site; the sequence is GSQSSGKS. A helical membrane pass occupies residues 682 to 702; it reads IPPWIYVLLAVLGWNEFVAVI. At 703-705 the chain is on the lumenal side; it reads RNP. The helical transmembrane segment at 706 to 726 threads the bilayer; it reads LFVTLTLILGATFFVIHKFGL. Topologically, residues 727–776 are cytoplasmic; that stretch reads WGPVVNVVQSAVGETRTAIKDKLRQFVVEDHEVKESFEMKDFSKNEQKEK.

Belongs to the TRAFAC class dynamin-like GTPase superfamily. GB1/RHD3 GTPase family. RHD3 subfamily. In terms of assembly, interacts with RTN1 and YOP1; GTP binding is not required for these interactions.

The protein localises to the endoplasmic reticulum membrane. Its function is as follows. Cooperates with the reticulon proteins RTN1 and RTN2 and the tubule-shaping DP1 family protein YOP1 to generate and maintain the structure of the tubular endoplasmic reticulum network. Has GTPase activity, which is required for its function in ER organization. This Saccharomyces cerevisiae (strain AWRI1631) (Baker's yeast) protein is Protein SEY1.